We begin with the raw amino-acid sequence, 194 residues long: Lymphocyte antigen 6 complex locus protein G5b (194 aa).

A signal peptide spans 1-18; the sequence is MRACVLVHVLTMVGFALG. One can recognise a UPAR/Ly6 domain in the interval 26–118; it reads RTCHLCFLED…SAQHQSTLPG (93 aa). 5 disulfide bridges follow: Cys28/Cys55, Cys31/Cys40, Cys47/Cys73, Cys81/Cys98, and Cys99/Cys104. An N-linked (GlcNAc...) asparagine glycan is attached at Asn182.

In terms of processing, N-glycosylated.

It is found in the secreted. The protein is Lymphocyte antigen 6 complex locus protein G5b (Ly6g5b) of Rattus norvegicus (Rat).